Consider the following 325-residue polypeptide: Peroxidase 45 (325 aa).

An N-terminal signal peptide occupies residues 1–25 (MEKNTSQTIFSNFFLLLLLSSCVSA). 4 disulfide bridges follow: Cys36-Cys115, Cys69-Cys74, Cys121-Cys321, and Cys200-Cys232. His67 serves as the catalytic Proton acceptor. Ca(2+) is bound by residues Asp68, Val71, Gly73, Asp75, and Ser77. Residue Pro163 participates in substrate binding. His193 is a binding site for heme b. Residue Thr194 participates in Ca(2+) binding. Residues Asp245, Ser248, and Asp253 each contribute to the Ca(2+) site.

It belongs to the peroxidase family. Classical plant (class III) peroxidase subfamily. Requires heme b as cofactor. The cofactor is Ca(2+). In terms of tissue distribution, slightly expressed in roots.

The protein resides in the secreted. The catalysed reaction is 2 a phenolic donor + H2O2 = 2 a phenolic radical donor + 2 H2O. Its function is as follows. Removal of H(2)O(2), oxidation of toxic reductants, biosynthesis and degradation of lignin, suberization, auxin catabolism, response to environmental stresses such as wounding, pathogen attack and oxidative stress. These functions might be dependent on each isozyme/isoform in each plant tissue. The protein is Peroxidase 45 (PER45) of Arabidopsis thaliana (Mouse-ear cress).